A 464-amino-acid polypeptide reads, in one-letter code: Protein FAM90A22 (464 aa).

Disordered regions lie at residues 1–43 (MMAR…PRLK), 70–389 (PATL…HDGA), and 415–437 (HSPE…SEAP). Composition is skewed to basic and acidic residues over residues 74-89 (GKKE…KPRA) and 97-114 (NKDK…DPQR). Residues 182–197 (SLSPLRKTSLSSSSSL) are compositionally biased toward low complexity.

The protein belongs to the FAM90 family.

The polypeptide is Protein FAM90A22 (Homo sapiens (Human)).